Reading from the N-terminus, the 157-residue chain is Nucleoside diphosphate kinase (157 aa).

ATP is bound by residues Lys12, Phe60, Arg88, Thr94, and Arg105. His121 (pros-phosphohistidine intermediate) is an active-site residue.

This sequence belongs to the NDK family. The cofactor is Mg(2+).

It is found in the cytoplasm. The catalysed reaction is a 2'-deoxyribonucleoside 5'-diphosphate + ATP = a 2'-deoxyribonucleoside 5'-triphosphate + ADP. The enzyme catalyses a ribonucleoside 5'-diphosphate + ATP = a ribonucleoside 5'-triphosphate + ADP. Functionally, major role in the synthesis of nucleoside triphosphates other than ATP. The ATP gamma phosphate is transferred to the NDP beta phosphate via a ping-pong mechanism, using a phosphorylated active-site intermediate. The sequence is that of Nucleoside diphosphate kinase from Pyrococcus horikoshii (strain ATCC 700860 / DSM 12428 / JCM 9974 / NBRC 100139 / OT-3).